Consider the following 461-residue polypeptide: Pup--protein ligase (461 aa).

Position 9 (E9) interacts with Mg(2+). R53 contacts ATP. Residue Y55 coordinates Mg(2+). Residue D57 is the Proton acceptor of the active site. E63 is a Mg(2+) binding site. Residues T66 and W420 each coordinate ATP.

This sequence belongs to the Pup ligase/Pup deamidase family. Pup-conjugating enzyme subfamily.

It catalyses the reaction ATP + [prokaryotic ubiquitin-like protein]-L-glutamate + [protein]-L-lysine = ADP + phosphate + N(6)-([prokaryotic ubiquitin-like protein]-gamma-L-glutamyl)-[protein]-L-lysine.. It functions in the pathway protein degradation; proteasomal Pup-dependent pathway. It participates in protein modification; protein pupylation. Functionally, catalyzes the covalent attachment of the prokaryotic ubiquitin-like protein modifier Pup to the proteasomal substrate proteins, thereby targeting them for proteasomal degradation. This tagging system is termed pupylation. The ligation reaction involves the side-chain carboxylate of the C-terminal glutamate of Pup and the side-chain amino group of a substrate lysine. This chain is Pup--protein ligase, found in Renibacterium salmoninarum (strain ATCC 33209 / DSM 20767 / JCM 11484 / NBRC 15589 / NCIMB 2235).